The primary structure comprises 416 residues: Phosphatidylinositol 5-phosphate 4-kinase type-2 beta (416 aa).

Ser-2 bears the N-acetylserine mark. Position 8 is a phosphothreonine (Thr-8). The residue at position 19 (Ser-19) is a Phosphoserine. A PIPK domain is found at 38–415 (ASEPILSVLM…RFNEFMSNIL (378 aa)). The segment at 64 to 70 (VMLMPDD) is required for interaction with PIP5K1A. Residues Lys-94 and Lys-150 each carry the N6-acetyllysine modification. ATP is bound by residues 202–204 (RNV) and Lys-214. GTP contacts are provided by residues 203 to 204 (NV) and Lys-214. Phosphothreonine is present on Thr-322. Phosphoserine is present on Ser-326. Asp-369 is a binding site for GTP.

Homodimer. Binds TNFRSF1A. Interacts with PIP4K2A; the interaction suppresses ubiquitination by the SPOP/CUL3 complex. Probably interacts with PIP5K1A; the interaction inhibits PIP5K1A kinase activity. In terms of processing, ubiquitinated by the SPOP/CUL3 complex. Ubiquitination is stimulated by PtdIns5P levels. Post-translationally, phosphorylated on serine residues.

It is found in the endoplasmic reticulum membrane. The protein resides in the cell membrane. It localises to the nucleus. Its subcellular location is the cytoplasm. The catalysed reaction is a 1,2-diacyl-sn-glycero-3-phospho-(1D-myo-inositol-5-phosphate) + ATP = a 1,2-diacyl-sn-glycero-3-phospho-(1D-myo-inositol-4,5-bisphosphate) + ADP + H(+). The enzyme catalyses 1,2-dihexadecanoyl-sn-glycero-3-phospho-(1D-myo-inositol-5-phosphate) + ATP = 1,2-dihexadecanoyl-sn-glycero-3-phospho-(1D-myo-inositol-4,5-bisphosphate) + ADP + H(+). It catalyses the reaction 1,2-dihexadecanoyl-sn-glycero-3-phospho-(1D-myo-inositol-5-phosphate) + GTP = 1,2-dihexadecanoyl-sn-glycero-3-phospho-(1D-myo-inositol-4,5-bisphosphate) + GDP + H(+). Functionally, participates in the biosynthesis of phosphatidylinositol 4,5-bisphosphate. Preferentially utilizes GTP, rather than ATP, for PI(5)P phosphorylation and its activity reflects changes in direct proportion to the physiological GTP concentration. Its GTP-sensing activity is critical for metabolic adaptation. In collaboration with PIP4K2A, has a role in mediating autophagy in times of nutrient stress. Required for autophagosome-lysosome fusion and the regulation of cellular lipid metabolism. PIP4Ks negatively regulate insulin signaling through a catalytic-independent mechanism. They interact with PIP5Ks and suppress PIP5K-mediated PtdIns(4,5)P2 synthesis and insulin-dependent conversion to PtdIns(3,4,5)P3. This is Phosphatidylinositol 5-phosphate 4-kinase type-2 beta from Mus musculus (Mouse).